A 431-amino-acid polypeptide reads, in one-letter code: Adenylosuccinate synthetase (431 aa).

GTP contacts are provided by residues 13–19 (GDEGKGK) and 41–43 (GHT). The Proton acceptor role is filled by D14. The Mg(2+) site is built by D14 and G41. IMP is bound by residues 14–17 (DEGK), 39–42 (NAGH), T130, R144, Q225, T240, and R304. The active-site Proton donor is the H42. 300 to 306 (ATTGRER) contributes to the substrate binding site. GTP-binding positions include R306, 332–334 (KLD), and 415–417 (STG).

Belongs to the adenylosuccinate synthetase family. In terms of assembly, homodimer. The cofactor is Mg(2+).

Its subcellular location is the cytoplasm. The catalysed reaction is IMP + L-aspartate + GTP = N(6)-(1,2-dicarboxyethyl)-AMP + GDP + phosphate + 2 H(+). The protein operates within purine metabolism; AMP biosynthesis via de novo pathway; AMP from IMP: step 1/2. Its function is as follows. Plays an important role in the de novo pathway of purine nucleotide biosynthesis. Catalyzes the first committed step in the biosynthesis of AMP from IMP. In Colwellia psychrerythraea (strain 34H / ATCC BAA-681) (Vibrio psychroerythus), this protein is Adenylosuccinate synthetase.